The following is a 279-amino-acid chain: Movement protein (279 aa).

The segment at 246-279 (SESEELNVESPPAAIGSSSASRSEAFRPQVVNGL) is disordered. The span at 254–268 (ESPPAAIGSSSASRS) shows a compositional bias: low complexity.

Belongs to the cucumovirus movement protein family.

It is found in the host cell junction. Its subcellular location is the host plasmodesma. Functionally, transports viral genome to neighboring plant cells directly through plasmosdesmata, without any budding. The movement protein allows efficient cell to cell propagation, by bypassing the host cell wall barrier. Acts by forming a tubular structure at the host plasmodesmata, enlarging it enough to allow free passage of virion capsids. The sequence is that of Movement protein from Cucumber mosaic virus (strain O) (CMV).